Consider the following 382-residue polypeptide: Dual-specificity RNA methyltransferase RlmN (382 aa).

Catalysis depends on E94, which acts as the Proton acceptor. The region spanning 100–336 (EANRGTLCVS…NTITRKTRGD (237 aa)) is the Radical SAM core domain. Residues C107 and C342 are joined by a disulfide bond. [4Fe-4S] cluster-binding residues include C114, C118, and C121. S-adenosyl-L-methionine is bound by residues 168–169 (GE), S200, 222–224 (SLH), and N299. The active-site S-methylcysteine intermediate is the C342.

It belongs to the radical SAM superfamily. RlmN family. Requires [4Fe-4S] cluster as cofactor.

The protein resides in the cytoplasm. The enzyme catalyses adenosine(2503) in 23S rRNA + 2 reduced [2Fe-2S]-[ferredoxin] + 2 S-adenosyl-L-methionine = 2-methyladenosine(2503) in 23S rRNA + 5'-deoxyadenosine + L-methionine + 2 oxidized [2Fe-2S]-[ferredoxin] + S-adenosyl-L-homocysteine. It carries out the reaction adenosine(37) in tRNA + 2 reduced [2Fe-2S]-[ferredoxin] + 2 S-adenosyl-L-methionine = 2-methyladenosine(37) in tRNA + 5'-deoxyadenosine + L-methionine + 2 oxidized [2Fe-2S]-[ferredoxin] + S-adenosyl-L-homocysteine. Its function is as follows. Specifically methylates position 2 of adenine 2503 in 23S rRNA and position 2 of adenine 37 in tRNAs. m2A2503 modification seems to play a crucial role in the proofreading step occurring at the peptidyl transferase center and thus would serve to optimize ribosomal fidelity. The chain is Dual-specificity RNA methyltransferase RlmN from Legionella pneumophila subsp. pneumophila (strain Philadelphia 1 / ATCC 33152 / DSM 7513).